A 303-amino-acid chain; its full sequence is ASC1-like protein (303 aa).

6 helical membrane-spanning segments follow: residues 19–39 (YEDFAVLPLFALFFPSVRFLL), 81–101 (CIYFLSAEVFALVVTYNEPWF), 127–147 (ALYMYTGGFYTYSIFALIFWE), 153–173 (FGVSMSHHVATAILIVLSYNI), 212–232 (YLCLSWIILRLIYYPFWVLWS), and 255–275 (YIFNSLLFCLLVLHIYWWVLI). The region spanning 72-284 (RKFKESAWKC…IYRMLVKQIQ (213 aa)) is the TLC domain.

The protein resides in the endoplasmic reticulum membrane. Functionally, mediates resistance to sphinganine-analog mycotoxins (SAMs) by restoring the sphingolipid biosynthesis. Could salvage the transport of GPI-anchored proteins from the endoplasmic reticulum to the Golgi apparatus in ceramides-depleted cells after SAM exposure. In Solanum lycopersicum (Tomato), this protein is ASC1-like protein.